The sequence spans 86 residues: Large ribosomal subunit protein eL43 (86 aa).

Zn(2+) contacts are provided by cysteine 40, cysteine 43, cysteine 58, and cysteine 61. The C4-type zinc-finger motif lies at 40–61 (CPFCRSKAVIREAYGIYRCKKC).

The protein belongs to the eukaryotic ribosomal protein eL43 family. Putative zinc-binding subfamily. As to quaternary structure, part of the 50S ribosomal subunit. It depends on Zn(2+) as a cofactor.

Its function is as follows. Binds to the 23S rRNA. The polypeptide is Large ribosomal subunit protein eL43 (Nanoarchaeum equitans (strain Kin4-M)).